A 786-amino-acid chain; its full sequence is MAGLTAAAPRPGVLLLLLSILHPSRPGGVPGAIPGGVPGGVFYPGAGLGALGGGALGPGGKPLKPVPGGLAGAGLGAGLGAFPAVTFPGALVPGGVADAAAAYKAAKAGAGLGGVPGVGGLGVSAGAVVPQPGAGVKPGKVPGVGLPGVYPGGVLPGARFPGVGVLPGVPTGAGVKPKAPGVGGAFAGIPGVGPFGGPQPGVPLGYPIKAPKLPGGYGLPYTTGKLPYGYGPGGVAGAAGKAGYPTGTGVGPQAAAAAAAKAAAKFGAGAAGVLPGVGGAGVPGVPGAIPGIGGIAGVGTPAAAAAAAAAAKAAKYGAAAGLVPGGPGFGPGVVGVPGAGVPGVGVPGAGIPVVPGAGIPGAAVPGVVSPEAAAKAAAKAAKYGARPGVGVGGIPTYGVGAGGFPGFGVGVGGIPGVAGVPGVGGVPGVGGVPGVGISPEAQAAAAAKAAKYGAAGAGVLGGLVPGAPGAVPGVPGTGGVPGVGTPAAAAAKAAAKAAQFGLVPGVGVAPGVGVAPGVGVAPGVGLAPGVGVAPGVGVAPGVGVAPGIGPGGVAAAAKSAAKVAAKAQLRAAAGLGAGIPGLGVGVGVPGLGVGAGVPGLGVGAGVPGFGAGADEGVRRSLSPELREGDPSSSQHLPSTPSSPRVPGALAAAKAAKYGAAVPGVLGGLGALGGVGIPGGVVGAGPAAAAAAAKAAAKAAQFGLVGAAGLGGLGVGGLGVPGVGGLGGIPPAAAAKAAKYGAAGLGGVLGGAGQFPLGGVAARPGFGLSPIFPGGACLGKACGRKRK.

The first 26 residues, 1-26 (MAGLTAAAPRPGVLLLLLSILHPSRP), serve as a signal peptide directing secretion. P34 is modified (hydroxyproline). Residues P65, P67, and P88 each carry the hydroxyproline; partial modification. An allysine mark is found at K104 and K107. P116 bears the 4-hydroxyproline; partial mark. 4 positions are modified to hydroxyproline; partial: P156, P167, P170, and P177. P190 is modified (4-hydroxyproline; partial). Allysine occurs at positions 241, 261, and 265. 4-hydroxyproline; partial occurs at positions 283 and 286. Position 290 is a hydroxyproline; partial (P290). Allysine is present on residues K312 and K315. 4-hydroxyproline; partial is present on residues P327, P342, and P347. Hydroxyproline; partial is present on residues P352 and P355. P360 is modified (4-hydroxyproline; partial). Allysine occurs at positions 375, 379, and 382. At P415 the chain carries 4-hydroxyproline; partial. P421 is modified (hydroxyproline; partial). Residue P427 is modified to 4-hydroxyproline; partial. 2 positions are modified to allysine: K448 and K451. Residue P465 is modified to Hydroxyproline; partial. P481 is modified (4-hydroxyproline; partial). Residues K492 and K496 each carry the allysine modification. A hydroxyproline; partial mark is found at P522 and P550. Residues K558, K562, and K566 each carry the allysine modification. The residue at position 580 (P580) is a 4-hydroxyproline; partial. P589 and P598 each carry 4-hydroxyproline. P607 carries the post-translational modification 4-hydroxyproline; partial. A disordered region spans residues 615–645 (EGVRRSLSPELREGDPSSSQHLPSTPSSPRV). A compositionally biased stretch (low complexity) spans 630–645 (PSSSQHLPSTPSSPRV). P646 carries the post-translational modification Hydroxyproline; partial. K653 and K656 each carry allysine. P677 is subject to 4-hydroxyproline; partial. Residues K693, K697, K735, and K738 each carry the allysine modification. 2 positions are modified to hydroxyproline; partial: P769 and P772. An intrachain disulfide couples C776 to C781.

It belongs to the elastin family. As to quaternary structure, the polymeric elastin chains are cross-linked together into an extensible 3D network. Forms a ternary complex with BGN and MFAP2. Interacts with MFAP2 via divalent cations (calcium &gt; magnesium &gt; manganese) in a dose-dependent and saturating manner. Interacts with FBLN5. Interacts with FBN1. Forms a ternary complex with FBN1 and FBLN2 or FBLN5. Interacts with MFAP4 in a Ca (2+)-dependent manner; this interaction promotes ELN self-assembly. Interacts with EFEMP2 with moderate affinity. Post-translationally, elastin is formed through the cross-linking of its soluble precursor tropoelastin. Cross-linking is initiated through the action of lysyl oxidase on exposed lysines to form allysine. Subsequent spontaneous condensation reactions with other allysine or unmodified lysine residues result in various bi-, tri-, and tetrafunctional cross-links. The most abundant cross-links in mature elastin fibers are lysinonorleucine, allysine aldol, desmosine, and isodesmosine. In terms of processing, hydroxylation on proline residues within the sequence motif, GXPG, is most likely 4-hydroxy as this fits the requirement for 4-hydroxylation in vertebrates. As to expression, expressed within the outer myometrial smooth muscle and throughout the arteriolar tree of uterus (at protein level). Also expressed in the large arteries, lung and skin.

The protein localises to the secreted. Its subcellular location is the extracellular space. It is found in the extracellular matrix. In terms of biological role, major structural protein of tissues such as aorta and nuchal ligament, which must expand rapidly and recover completely. Molecular determinant of the late arterial morphogenesis, stabilizing arterial structure by regulating proliferation and organization of vascular smooth muscle. The polypeptide is Elastin (ELN) (Homo sapiens (Human)).